The chain runs to 150 residues: Globin-2 A chain (150 aa).

Val-2 carries the post-translational modification Blocked amino end (Val). Residues 10–150 (CGSEAIKANL…ALVGVVQAAL (141 aa)) form the Globin domain. Residue His-102 participates in heme b binding.

Belongs to the globin family. In terms of assembly, heterotetramer of two alpha chains and two beta chains.

This chain is Globin-2 A chain, found in Anadara inaequivalvis (Inequivalve ark).